A 580-amino-acid polypeptide reads, in one-letter code: Alpha-glucosidase (580 aa).

A signal peptide spans Met1 to Gly19. 2 N-linked (GlcNAc...) asparagine glycosylation sites follow: Asn102 and Asn127. Asp224 (nucleophile) is an active-site residue. Glu290 serves as the catalytic Proton donor. N-linked (GlcNAc...) asparagine glycosylation is present at Asn501. The chain crosses the membrane as a helical span at residues Ala560–Val580.

The protein belongs to the glycosyl hydrolase 13 family. In terms of assembly, (Microbial infection) Binds to L.sphaericus BinB subunit of the binary toxin BinAB. In terms of tissue distribution, in 4th-instar larvae produced in the brush border membranes of the gastric caeca and the posterior stomach cells (at protein level).

The protein localises to the membrane. It carries out the reaction Hydrolysis of terminal, non-reducing (1-&gt;4)-linked alpha-D-glucose residues with release of alpha-D-glucose.. In terms of biological role, probably an alpha-glucosidase, it has no alpha-amylase function. (Microbial infection) Serves as the larval receptor for Lysinibacillus sphaericus BinB toxin. The polypeptide is Alpha-glucosidase (Culex pipiens (House mosquito)).